Consider the following 328-residue polypeptide: Beta-ketoacyl-[acyl-carrier-protein] synthase III (328 aa).

Residues Cys113 and His252 contribute to the active site. The ACP-binding stretch occupies residues Gln253–Arg257. Residue Asn282 is part of the active site.

The protein belongs to the thiolase-like superfamily. FabH family. Homodimer.

It localises to the cytoplasm. It catalyses the reaction malonyl-[ACP] + acetyl-CoA + H(+) = 3-oxobutanoyl-[ACP] + CO2 + CoA. It participates in lipid metabolism; fatty acid biosynthesis. In terms of biological role, catalyzes the condensation reaction of fatty acid synthesis by the addition to an acyl acceptor of two carbons from malonyl-ACP. Catalyzes the first condensation reaction which initiates fatty acid synthesis and may therefore play a role in governing the total rate of fatty acid production. Possesses both acetoacetyl-ACP synthase and acetyl transacylase activities. Its substrate specificity determines the biosynthesis of branched-chain and/or straight-chain of fatty acids. The sequence is that of Beta-ketoacyl-[acyl-carrier-protein] synthase III from Campylobacter fetus subsp. fetus (strain 82-40).